The following is a 251-amino-acid chain: MSDALPMSPAEFEQALRAKGAYYHIHHPYHVAMYQGRATREQIQGWVANRFYYQVNIPMKDAAILANCPDREVRREWIQRLLDHDGAPGEDGGIEAWLRLGQAVGLDPDQLRSQELVLPGVRFAVDAYVNFARRASWQEAASSSLTELFAPQIHQSRLDSWPQHYPWIDPAGYEYFRTRLGQARRDVEHGLAITLQHYTTRAGQERMLEILQFKLDILWSMLDAMSMAYELNRPPYHSVTQERMWHKGITL.

The protein belongs to the PqqC family.

The enzyme catalyses 6-(2-amino-2-carboxyethyl)-7,8-dioxo-1,2,3,4,7,8-hexahydroquinoline-2,4-dicarboxylate + 3 O2 = pyrroloquinoline quinone + 2 H2O2 + 2 H2O + H(+). The protein operates within cofactor biosynthesis; pyrroloquinoline quinone biosynthesis. Functionally, ring cyclization and eight-electron oxidation of 3a-(2-amino-2-carboxyethyl)-4,5-dioxo-4,5,6,7,8,9-hexahydroquinoline-7,9-dicarboxylic-acid to PQQ. The chain is Pyrroloquinoline-quinone synthase from Pseudomonas putida (strain ATCC 700007 / DSM 6899 / JCM 31910 / BCRC 17059 / LMG 24140 / F1).